The chain runs to 452 residues: F-box only protein 47 (452 aa).

The 51-residue stretch at 41-91 (FGNFKALPLEIFQIILKYLSVKDISMLSMVSKTVSQHIINYISTSSGSKRL) folds into the F-box domain.

Part of a SCF (SKP1-cullin-F-box) protein ligase complex. Widely expressed, with highest levels in kidney, liver and pancreas. Down-regulated in tumors.

Functionally, probably recognizes and binds to some phosphorylated proteins and promotes their ubiquitination and degradation. The sequence is that of F-box only protein 47 from Homo sapiens (Human).